Consider the following 465-residue polypeptide: ATP synthase subunit beta (465 aa).

153–160 (GGAGVGKT) provides a ligand contact to ATP.

This sequence belongs to the ATPase alpha/beta chains family. As to quaternary structure, F-type ATPases have 2 components, CF(1) - the catalytic core - and CF(0) - the membrane proton channel. CF(1) has five subunits: alpha(3), beta(3), gamma(1), delta(1), epsilon(1). CF(0) has three main subunits: a(1), b(2) and c(9-12). The alpha and beta chains form an alternating ring which encloses part of the gamma chain. CF(1) is attached to CF(0) by a central stalk formed by the gamma and epsilon chains, while a peripheral stalk is formed by the delta and b chains.

Its subcellular location is the cell membrane. It carries out the reaction ATP + H2O + 4 H(+)(in) = ADP + phosphate + 5 H(+)(out). Produces ATP from ADP in the presence of a proton gradient across the membrane. The catalytic sites are hosted primarily by the beta subunits. The chain is ATP synthase subunit beta from Clostridium perfringens (strain ATCC 13124 / DSM 756 / JCM 1290 / NCIMB 6125 / NCTC 8237 / Type A).